The primary structure comprises 245 residues: Probable phosphatase ECA2529 (245 aa).

Zn(2+)-binding residues include His7, His9, His15, His40, Glu73, His101, His131, Asp192, and His194.

The protein belongs to the PHP family. In terms of assembly, homotrimer. Zn(2+) serves as cofactor.

This chain is Probable phosphatase ECA2529, found in Pectobacterium atrosepticum (strain SCRI 1043 / ATCC BAA-672) (Erwinia carotovora subsp. atroseptica).